Here is a 129-residue protein sequence, read N- to C-terminus: MKKGNVRTLDGIIYSLFIFMTIVTLFIIYRDIPSNAVLNFVTAYAIFAILIPLYILVRVLFTVKHFTFEEVKKEGVKFLMFFIGIMMLNLVGDFLLPLPDLKLSKMLPSSLGFAFGITCFDIVLSKRTK.

This is an uncharacterized protein from Clostridium perfringens (strain 13 / Type A).